The sequence spans 493 residues: Hexokinase-like 1 protein (493 aa).

Residues 38-488 form the Hexokinase domain; the sequence is ASTCPILTKF…SGLGAALLAA (451 aa). Residues 93 to 232 are hexokinase small subdomain; that stretch reads SGNEEGLFYA…GLDMRVSALV (140 aa). Positions 107, 108, and 109 each coordinate ADP. D-glucose-binding residues include threonine 198, lysine 199, asparagine 233, and aspartate 234. The segment at 233–477 is hexokinase large subdomain; sequence NDGVGTLAGA…SHVAIKHTKD (245 aa). Threonine 257 contributes to the ADP binding site. D-glucose contacts are provided by asparagine 260, glutamate 287, and glutamate 317. Alanine 442 contacts ADP.

Belongs to the hexokinase family.

The enzyme catalyses a D-hexose + ATP = a D-hexose 6-phosphate + ADP + H(+). It carries out the reaction D-fructose + ATP = D-fructose 6-phosphate + ADP + H(+). The catalysed reaction is D-glucose + ATP = D-glucose 6-phosphate + ADP + H(+). It participates in carbohydrate metabolism; hexose metabolism. The protein operates within carbohydrate degradation; glycolysis; D-glyceraldehyde 3-phosphate and glycerone phosphate from D-glucose: step 1/4. In terms of biological role, fructose and glucose phosphorylating enzyme. The sequence is that of Hexokinase-like 1 protein from Arabidopsis thaliana (Mouse-ear cress).